Here is a 274-residue protein sequence, read N- to C-terminus: Undecaprenyl-diphosphatase (274 aa).

The next 8 helical transmembrane spans lie at 6 to 26 (SLFI…LPVS), 45 to 65 (AKTF…VMFW), 94 to 114 (GHIL…HDVI), 117 to 137 (LFAP…LLAA), 155 to 174 (YRQA…PGFS), 191 to 211 (YAAA…ASGL), 223 to 243 (GDLP…LIAI), and 253 to 273 (ISFV…YMVF).

It belongs to the UppP family.

The protein localises to the cell inner membrane. The enzyme catalyses di-trans,octa-cis-undecaprenyl diphosphate + H2O = di-trans,octa-cis-undecaprenyl phosphate + phosphate + H(+). Catalyzes the dephosphorylation of undecaprenyl diphosphate (UPP). Confers resistance to bacitracin. The polypeptide is Undecaprenyl-diphosphatase (Serratia proteamaculans (strain 568)).